A 236-amino-acid polypeptide reads, in one-letter code: uncharacterized protein (236 aa).

Residues 3–116 (TCLIVDDELF…RLSKTLKRVR (114 aa)) enclose the Response regulatory domain. 4-aspartylphosphate is present on D54. In terms of domain architecture, HTH LytTR-type spans 135–235 (LPCYSGSKLK…LKSLKQLFGF (101 aa)).

This is an uncharacterized protein from Shewanella oneidensis (strain ATCC 700550 / JCM 31522 / CIP 106686 / LMG 19005 / NCIMB 14063 / MR-1).